A 501-amino-acid chain; its full sequence is Probable sucrose utilization protein SUC1 (501 aa).

Residues 13–39 (CDSCSFRKVKCDMKTPCSRCVLNNLKC) constitute a DNA-binding region (zn(2)-C6 fungal-type).

Belongs to the MAL13 family.

The protein localises to the nucleus. Functionally, affects sucrose utilization and alpha-glucosidase activity. Probable transcriptional activator. The sequence is that of Probable sucrose utilization protein SUC1 (SUC1) from Candida albicans (strain SC5314 / ATCC MYA-2876) (Yeast).